Reading from the N-terminus, the 56-residue chain is Large ribosomal subunit protein bL32B (56 aa).

Residues 1 to 19 are compositionally biased toward basic residues; sequence MAVPKRRMSRSNTRHRRAQ. The interval 1–22 is disordered; that stretch reads MAVPKRRMSRSNTRHRRAQWKA.

The protein belongs to the bacterial ribosomal protein bL32 family.

The chain is Large ribosomal subunit protein bL32B (rpmF2) from Streptomyces coelicolor (strain ATCC BAA-471 / A3(2) / M145).